Reading from the N-terminus, the 219-residue chain is tRNA (guanine-N(7)-)-methyltransferase (219 aa).

4 residues coordinate S-adenosyl-L-methionine: Glu51, Glu76, Asp103, and Asp125. Residue Asp125 is part of the active site. Residues Lys129, Asp161, and 199–202 (TRYE) contribute to the substrate site.

This sequence belongs to the class I-like SAM-binding methyltransferase superfamily. TrmB family.

It catalyses the reaction guanosine(46) in tRNA + S-adenosyl-L-methionine = N(7)-methylguanosine(46) in tRNA + S-adenosyl-L-homocysteine. It participates in tRNA modification; N(7)-methylguanine-tRNA biosynthesis. In terms of biological role, catalyzes the formation of N(7)-methylguanine at position 46 (m7G46) in tRNA. This chain is tRNA (guanine-N(7)-)-methyltransferase, found in Hyphomonas neptunium (strain ATCC 15444).